Here is a 712-residue protein sequence, read N- to C-terminus: Polyribonucleotide nucleotidyltransferase (712 aa).

Residues aspartate 485 and aspartate 491 each contribute to the Mg(2+) site. One can recognise a KH domain in the interval 552–611; that stretch reads PRIHTMKIDPKKIKDVIGKGGAVIRSLTEETGTSIDIDDDGTVKIAATDNNAAKMVMSRI. One can recognise an S1 motif domain in the interval 621–689; that stretch reads NAIYTGKVSR…RQNRIRLTMK (69 aa).

Belongs to the polyribonucleotide nucleotidyltransferase family. Component of the RNA degradosome, which is a multiprotein complex involved in RNA processing and mRNA degradation. It depends on Mg(2+) as a cofactor.

Its subcellular location is the cytoplasm. It catalyses the reaction RNA(n+1) + phosphate = RNA(n) + a ribonucleoside 5'-diphosphate. Involved in mRNA degradation. Catalyzes the phosphorolysis of single-stranded polyribonucleotides processively in the 3'- to 5'-direction. This Haemophilus ducreyi (strain 35000HP / ATCC 700724) protein is Polyribonucleotide nucleotidyltransferase.